A 1002-amino-acid chain; its full sequence is Golgin subfamily A member 2 (1002 aa).

Residues 1–11 (MWPQPRLPPRP) are compositionally biased toward pro residues. The interaction with p115/USO1 stretch occupies residues 1-84 (MWPQPRLPPR…AATLQPSDDT (84 aa)). The segment at 1-107 (MWPQPRLPPR…TSMAASQNHD (107 aa)) is disordered. Positions 16 to 892 (ETRQSKLAAA…LELQELVLRL (877 aa)) form a coiled coil. Dimethylated arginine is present on residues arginine 18, arginine 30, and arginine 35. Residues 26–49 (KKKLREYQQRNSPGVPTGAKKKKK) carry the Nuclear localization signal motif. A Phosphoserine modification is found at serine 37. Over residues 52 to 63 (NGSNPETTTSGG) the composition is skewed to polar residues. A Phosphoserine modification is found at serine 66. The span at 95–105 (ASLTSMAASQN) shows a compositional bias: polar residues. A phosphoserine mark is found at serine 273, serine 438, and serine 690. The interval 694–724 (HPGEGDGLDREEEEDEEEEEEEAVAVPQPMP) is disordered. Residues 702–716 (DREEEEDEEEEEEEA) show a composition bias toward acidic residues. Phosphoserine occurs at positions 937, 953, and 981. The tract at residues 992-1002 (DENDEVKITVI) is interaction with GORASP1/GRASP65.

This sequence belongs to the GOLGA2 family. As to quaternary structure, homodimer, may assemble into homohexamers. Homotetramer; forms a parallel homotetramer with a flexible rod-like structure that can give rise to I- and Y-shaped conformations. Interacts with GORASP1/GRASP65. The homooligomer forms a complex with GORASP1 with a 1:1 stoichiometry. Interacts with RAB1B that has been activated by GTP-binding. Interacts with p115/USO1; interaction with p115/USO1 inhibits interaction with STX5 and/or RAB1B. Interacts with STX5. Interacts with ZFPL1. Interacts with AKAP450/AKAP9; leading to recruit AKAP450/AKAP9 to the cis-Golgi. In terms of processing, cleaved by caspases at the onset of apoptosis. Methylation by PRMT5 is required for Golgi ribbon formation. While dimethylation at Arg-30 and Arg-35 are confirmed in vivo, it is unclear whether Arg-18 is methylated in vivo. Post-translationally, phosphorylated at Ser-37 by CDK1 at the onset of mitosis, inhibiting the interaction with p115/USO1 and triggering Golgi disassembly. Phosphorylated at Ser-37 in prophase as the Golgi complex starts to break down, and remains phosphorylated during further breakdown and partitioning of the Golgi fragments in metaphase and anaphase. In telophase, GM130 is dephosphorylated by PP2A as the Golgi fragments start to reassemble.

It is found in the golgi apparatus. The protein localises to the cis-Golgi network membrane. It localises to the endoplasmic reticulum-Golgi intermediate compartment membrane. Its subcellular location is the cytoplasm. The protein resides in the cytoskeleton. It is found in the spindle pole. In terms of biological role, peripheral membrane component of the cis-Golgi stack that acts as a membrane skeleton that maintains the structure of the Golgi apparatus, and as a vesicle thether that facilitates vesicle fusion to the Golgi membrane. Required for normal protein transport from the endoplasmic reticulum to the Golgi apparatus and the cell membrane. Together with p115/USO1 and STX5, involved in vesicle tethering and fusion at the cis-Golgi membrane to maintain the stacked and inter-connected structure of the Golgi apparatus. Plays a central role in mitotic Golgi disassembly: phosphorylation at Ser-37 by CDK1 at the onset of mitosis inhibits the interaction with p115/USO1, preventing tethering of COPI vesicles and thereby inhibiting transport through the Golgi apparatus during mitosis. Also plays a key role in spindle pole assembly and centrosome organization. Promotes the mitotic spindle pole assembly by activating the spindle assembly factor TPX2 to nucleate microtubules around the Golgi and capture them to couple mitotic membranes to the spindle: upon phosphorylation at the onset of mitosis, GOLGA2 interacts with importin-alpha via the nuclear localization signal region, leading to recruit importin-alpha to the Golgi membranes and liberate the spindle assembly factor TPX2 from importin-alpha. TPX2 then activates AURKA kinase and stimulates local microtubule nucleation. Upon filament assembly, nascent microtubules are further captured by GOLGA2, thus linking Golgi membranes to the spindle. Regulates the meiotic spindle pole assembly, probably via the same mechanism. Also regulates the centrosome organization. Also required for the Golgi ribbon formation and glycosylation of membrane and secretory proteins. The protein is Golgin subfamily A member 2 (GOLGA2) of Homo sapiens (Human).